Consider the following 211-residue polypeptide: Somatotropin (211 aa).

Positions 1–23 are cleaved as a signal peptide; the sequence is MASGFLLCPVLLAVFFMSPVEVG. Residue histidine 40 coordinates Zn(2+). Cysteine 73 and cysteine 184 form a disulfide bridge. Glutamate 193 is a Zn(2+) binding site. An intrachain disulfide couples cysteine 201 to cysteine 209.

Belongs to the somatotropin/prolactin family.

It localises to the secreted. In terms of biological role, growth hormone plays an important role in growth control and is involved in the regulation of several anabolic processes. Implicated as an osmoregulatory substance important for seawater adaptation. The polypeptide is Somatotropin (gh) (Lepisosteus osseus (Long-nosed gar)).